The chain runs to 308 residues: Aspartate carbamoyltransferase catalytic subunit (308 aa).

Arg-55 and Thr-56 together coordinate carbamoyl phosphate. L-aspartate is bound at residue Lys-84. Positions 105, 133, and 136 each coordinate carbamoyl phosphate. L-aspartate-binding residues include Arg-167 and Arg-228. Carbamoyl phosphate-binding residues include Leu-267 and Pro-268.

It belongs to the aspartate/ornithine carbamoyltransferase superfamily. ATCase family. In terms of assembly, heterooligomer of catalytic and regulatory chains.

The enzyme catalyses carbamoyl phosphate + L-aspartate = N-carbamoyl-L-aspartate + phosphate + H(+). It functions in the pathway pyrimidine metabolism; UMP biosynthesis via de novo pathway; (S)-dihydroorotate from bicarbonate: step 2/3. In terms of biological role, catalyzes the condensation of carbamoyl phosphate and aspartate to form carbamoyl aspartate and inorganic phosphate, the committed step in the de novo pyrimidine nucleotide biosynthesis pathway. The sequence is that of Aspartate carbamoyltransferase catalytic subunit from Methanocella arvoryzae (strain DSM 22066 / NBRC 105507 / MRE50).